A 190-amino-acid polypeptide reads, in one-letter code: Peptidyl-tRNA hydrolase (190 aa).

TRNA is bound at residue Phe-14. His-19 serves as the catalytic Proton acceptor. TRNA contacts are provided by Met-64, Asn-66, and Asn-112.

This sequence belongs to the PTH family. Monomer.

It localises to the cytoplasm. It carries out the reaction an N-acyl-L-alpha-aminoacyl-tRNA + H2O = an N-acyl-L-amino acid + a tRNA + H(+). Functionally, hydrolyzes ribosome-free peptidyl-tRNAs (with 1 or more amino acids incorporated), which drop off the ribosome during protein synthesis, or as a result of ribosome stalling. Its function is as follows. Catalyzes the release of premature peptidyl moieties from peptidyl-tRNA molecules trapped in stalled 50S ribosomal subunits, and thus maintains levels of free tRNAs and 50S ribosomes. In Staphylococcus haemolyticus (strain JCSC1435), this protein is Peptidyl-tRNA hydrolase.